The following is a 132-amino-acid chain: Transcription antitermination protein NusB (132 aa).

This sequence belongs to the NusB family.

Its function is as follows. Involved in transcription antitermination. Required for transcription of ribosomal RNA (rRNA) genes. Binds specifically to the boxA antiterminator sequence of the ribosomal RNA (rrn) operons. The polypeptide is Transcription antitermination protein NusB (Campylobacter jejuni subsp. doylei (strain ATCC BAA-1458 / RM4099 / 269.97)).